We begin with the raw amino-acid sequence, 737 residues long: Aryl hydrocarbon receptor nuclear translocator 2 (737 aa).

A disordered region spans residues 1–73; it reads MATPAAVNPS…SRYDDDQIPG (73 aa). The span at 64 to 73 shows a compositional bias: basic and acidic residues; sequence SRYDDDQIPG. A bHLH domain is found at 78-131; it reads YARENHSEIERRRRNKMTQYITELSDMVPTCSALARKPDKLTILRMAVSHMKSM. 2 consecutive PAS domains span residues 149-221 and 340-406; these read TEQE…ENSM and SMDM…QVVK. A PAC domain is found at 413 to 456; it reads SVMYRFRMKNREWMLIRTSSFTFQNPYSDEIEYIICTNTNVKQL. 2 disordered regions span residues 525–556 and 588–721; these read MMVPSSTSGGQQLYSQGSPFQPGHSGKSFSSS and QVSW…TTNY. Composition is skewed to polar residues over residues 528 to 543 and 588 to 626; these read PSSTSGGQQLYSQGSP and QVSWSGNRPPFSGQQIPAQSNKAQSSPFGIGSSHSYQAD. Positions 627 to 642 are enriched in low complexity; sequence PSSYSPLSSPATSSPS. The segment covering 643-656 has biased composition (polar residues); that stretch reads GNAYSNLANRNTAF. Residues 659-688 are compositionally biased toward low complexity; it reads SGESSQSGGQFQGRPSEVWSQWQSQHHSQQ.

As to quaternary structure, efficient DNA binding requires dimerization with another bHLH protein. Heterodimer with the aryl hydrocarbon receptor (AHR), SIM1 or HIF2A/EPAS-1. Isoform 1 and isoform 2 are most highly expressed in the brain, eye and skeletal muscle and to a lower degree in liver, heart, kidney and swim bladder. Isoform 3 is most highly expressed in the eye, forebrain, midbrain, hindbrain, skeletal muscle, gills and brain but is barely detectable in liver, heart, kidney and swim bladder. Before the pharyngula period isoform 3 is expressed throughout the entire embryo and during this period extensively in the brain and eye.

The protein resides in the nucleus. Functionally, transcription factor that plays a role in the development of the hypothalamo-pituitary axis. Specifically recognizes the xenobiotic response element (XRE). Isoform 1 acts as a transcriptional activator. Isoform 3 acts as a transcriptional repressor. The chain is Aryl hydrocarbon receptor nuclear translocator 2 from Danio rerio (Zebrafish).